A 358-amino-acid polypeptide reads, in one-letter code: D-alanine--D-alanine ligase B (358 aa).

The region spanning 147–352 is the ATP-grasp domain; the sequence is KYVLENFKFK…YSALIDELIE (206 aa). 179–234 is an ATP binding site; it reads VEKLQYDVFIKPANSGSSVGITKAHNKEELLKGLEEAFIHDKNVLVEEAINAREIE. The Mg(2+) site is built by D305, E319, and N321.

This sequence belongs to the D-alanine--D-alanine ligase family. Requires Mg(2+) as cofactor. Mn(2+) is required as a cofactor.

The protein resides in the cytoplasm. It catalyses the reaction 2 D-alanine + ATP = D-alanyl-D-alanine + ADP + phosphate + H(+). It participates in cell wall biogenesis; peptidoglycan biosynthesis. In terms of biological role, cell wall formation. The protein is D-alanine--D-alanine ligase B of Clostridium tetani (strain Massachusetts / E88).